The sequence spans 298 residues: Protoheme IX farnesyltransferase (298 aa).

Transmembrane regions (helical) follow at residues 19–39 (VMSLVVFTAFVGLWIAPQPVN), 40–60 (PFVAFCAVLFIALGGGASGAL), 91–111 (LAVGIALSGLSVMMLGAGGNW), 112–132 (FAAGFLAFTIFFYAVVYTIWL), 140–160 (IVIGGAAGAFPPMIGWALPTG), 167–187 (LLMFALIFFWTPPHFWALALF), 213–233 (IFAYTLVLAPFALWLGFTSVG), 236–256 (LYLAVSVVLNALFIAGGWQIL), and 277–297 (LSLYYTFLHFLALLVQHWVGG).

The protein belongs to the UbiA prenyltransferase family. Protoheme IX farnesyltransferase subfamily. Interacts with CtaA.

It is found in the cell inner membrane. The enzyme catalyses heme b + (2E,6E)-farnesyl diphosphate + H2O = Fe(II)-heme o + diphosphate. Its pathway is porphyrin-containing compound metabolism; heme O biosynthesis; heme O from protoheme: step 1/1. Its function is as follows. Converts heme B (protoheme IX) to heme O by substitution of the vinyl group on carbon 2 of heme B porphyrin ring with a hydroxyethyl farnesyl side group. The protein is Protoheme IX farnesyltransferase of Paracoccus denitrificans.